Here is an 80-residue protein sequence, read N- to C-terminus: Putative membrane protein insertion efficiency factor (80 aa).

Belongs to the UPF0161 family.

The protein resides in the cell inner membrane. In terms of biological role, could be involved in insertion of integral membrane proteins into the membrane. The protein is Putative membrane protein insertion efficiency factor of Kosmotoga olearia (strain ATCC BAA-1733 / DSM 21960 / TBF 19.5.1).